A 204-amino-acid polypeptide reads, in one-letter code: Probable nicotinate-nucleotide adenylyltransferase (204 aa).

This sequence belongs to the NadD family.

It carries out the reaction nicotinate beta-D-ribonucleotide + ATP + H(+) = deamido-NAD(+) + diphosphate. It functions in the pathway cofactor biosynthesis; NAD(+) biosynthesis; deamido-NAD(+) from nicotinate D-ribonucleotide: step 1/1. Its function is as follows. Catalyzes the reversible adenylation of nicotinate mononucleotide (NaMN) to nicotinic acid adenine dinucleotide (NaAD). This chain is Probable nicotinate-nucleotide adenylyltransferase, found in Clostridium beijerinckii (strain ATCC 51743 / NCIMB 8052) (Clostridium acetobutylicum).